We begin with the raw amino-acid sequence, 208 residues long: ATP-dependent Clp protease proteolytic subunit (208 aa).

Catalysis depends on serine 111, which acts as the Nucleophile. Histidine 136 is a catalytic residue.

The protein belongs to the peptidase S14 family. As to quaternary structure, fourteen ClpP subunits assemble into 2 heptameric rings which stack back to back to give a disk-like structure with a central cavity, resembling the structure of eukaryotic proteasomes.

It is found in the cytoplasm. It catalyses the reaction Hydrolysis of proteins to small peptides in the presence of ATP and magnesium. alpha-casein is the usual test substrate. In the absence of ATP, only oligopeptides shorter than five residues are hydrolyzed (such as succinyl-Leu-Tyr-|-NHMec, and Leu-Tyr-Leu-|-Tyr-Trp, in which cleavage of the -Tyr-|-Leu- and -Tyr-|-Trp bonds also occurs).. Cleaves peptides in various proteins in a process that requires ATP hydrolysis. Has a chymotrypsin-like activity. Plays a major role in the degradation of misfolded proteins. The chain is ATP-dependent Clp protease proteolytic subunit from Vibrio campbellii (strain ATCC BAA-1116).